Consider the following 579-residue polypeptide: Arginine--tRNA ligase (579 aa).

The 'HIGH' region motif lies at 128-138; that stretch reads PNLAKEMHVGH.

The protein belongs to the class-I aminoacyl-tRNA synthetase family. In terms of assembly, monomer.

The protein resides in the cytoplasm. The enzyme catalyses tRNA(Arg) + L-arginine + ATP = L-arginyl-tRNA(Arg) + AMP + diphosphate. The chain is Arginine--tRNA ligase from Pseudomonas syringae pv. syringae (strain B728a).